Reading from the N-terminus, the 218-residue chain is MGQKVNPIGIRLGIIKDWNSKWFAGKRYAEFLIQDIKLRSDLKKKLMAAAVSKILIERPANNAVVTILTARPGVIIGKKGGGIETLRKEISDSLGVPVHLNIEEVKKPELDATLVAEGIAQQLEQRVMFRRAMKRAVTSALKAGAKGIKICVSGRLGGAEIARSEWYREGRVPLHTFRADIDYGTAESKTTYGIIGVKVWIFKGEILPQKKRSTESAQ.

A KH type-2 domain is found at 38 to 106 (LRSDLKKKLM…PVHLNIEEVK (69 aa)).

Belongs to the universal ribosomal protein uS3 family. As to quaternary structure, part of the 30S ribosomal subunit. Forms a tight complex with proteins S10 and S14.

Its function is as follows. Binds the lower part of the 30S subunit head. Binds mRNA in the 70S ribosome, positioning it for translation. The protein is Small ribosomal subunit protein uS3 of Legionella pneumophila (strain Lens).